The primary structure comprises 362 residues: Probable protein phosphatase 2C 11 (362 aa).

Residues 23-329 form the PPM-type phosphatase domain; sequence KLGLSSMQGW…DNMTMVLVQF (307 aa). Residues aspartate 57, glycine 58, aspartate 272, and aspartate 320 each contribute to the Mn(2+) site.

Belongs to the PP2C family. Mg(2+) is required as a cofactor. Requires Mn(2+) as cofactor.

The enzyme catalyses O-phospho-L-seryl-[protein] + H2O = L-seryl-[protein] + phosphate. The catalysed reaction is O-phospho-L-threonyl-[protein] + H2O = L-threonyl-[protein] + phosphate. The polypeptide is Probable protein phosphatase 2C 11 (Oryza sativa subsp. japonica (Rice)).